The following is a 691-amino-acid chain: MARPFPLERVRNIGIAAHIDAGKTTTTERILFYSGVVHKIGEVHDGAAVTDWMAQERERGITITAAAISTSWQDHRINIIDTPGHVDFTIEVERSMRVLDGVIAVFCAVGGVQPQSETVWRQADRYSVPRMVFVNKMDRTGADFLKVYGQIKDRLKANAAPIQLPIGAEGDLSGIIDLVANKAYIYKNDLGTDIEESDIPADMASEAAEWRAKLMETVAETDEELIEQFLENGELTEQQLKKGIREGVLKHGLVPLLCGSAFKNKGVQLVLDAVVDYLPAPVDVPPIQGVLPNGEEAVRPSDDSEPFSALAFKVMADPYGKLTFVRMYSGVLEKGSYVTNSTKDIKERISRLVVLKADDREEVDQLRAGDLGAVLGLKNTTTGDTLCTTDEPIVLETLFIPEPVISVAVEPKTKGDMEKLSKALVSLAEEDPTFRVSTDQETNQTVIAGMGELHLEILVDRMLREFKVEANIGAPQVSYRETIRSSSKGEGKFARQTGGKGQYGHVVIEMEPGEPGTGFEFVNKIVGGVVPKEYIGPASNGMKETCESGVLAGYPLIDVKVTMVDGSFHDVDSSEMAFKIAGSMAFKDGVKKCNPVLLEPMMKVEVETPEDFLGSIIGDLSSRRGQVEGQSIDDGQSKVQAKVPLAEMFGYATQLRSMTQGRGIFSMEFSNYEEVPRNVAEAIISKNQGNS.

The 275-residue stretch at 8 to 282 (ERVRNIGIAA…AVVDYLPAPV (275 aa)) folds into the tr-type G domain. GTP is bound by residues 17 to 24 (AHIDAGKT), 81 to 85 (DTPGH), and 135 to 138 (NKMD).

Belongs to the TRAFAC class translation factor GTPase superfamily. Classic translation factor GTPase family. EF-G/EF-2 subfamily.

It is found in the cytoplasm. Its function is as follows. Catalyzes the GTP-dependent ribosomal translocation step during translation elongation. During this step, the ribosome changes from the pre-translocational (PRE) to the post-translocational (POST) state as the newly formed A-site-bound peptidyl-tRNA and P-site-bound deacylated tRNA move to the P and E sites, respectively. Catalyzes the coordinated movement of the two tRNA molecules, the mRNA and conformational changes in the ribosome. The sequence is that of Elongation factor G from Prochlorococcus marinus (strain MIT 9211).